Consider the following 264-residue polypeptide: uncharacterized protein (264 aa).

Residues 7 to 27 form a helical membrane-spanning segment; sequence LTLGICLVLLIILIVGYVIMT.

The protein belongs to the staphylococcal tandem lipoprotein family.

Its subcellular location is the cell membrane. This is an uncharacterized protein from Staphylococcus aureus (strain MW2).